The chain runs to 389 residues: Ribonucleoside-diphosphate reductase subunit M2 (389 aa).

A Phosphoserine modification is found at S20. Residue T33 is modified to Phosphothreonine. The Cy signature appears at 49–51; that stretch reads RRI. D138, E169, and H172 together coordinate Fe cation. The active site involves Y176. E232, E266, and H269 together coordinate Fe cation.

It belongs to the ribonucleoside diphosphate reductase small chain family. In terms of assembly, heterodimer of a large and a small subunit. Interacts (via Cy motif and when phosphorylated at Thr-33) with CCNF; the interaction occurs exclusively in G2 and early M. Fe cation is required as a cofactor. Phosphorylation on Ser-20 relieves the inhibitory effect on Wnt signaling. Phosphorylated on Thr-33 by CDK1 and CDK2; predominantly in G2 and M phase. In terms of processing, ubiquitinated by the SCF(CCNF) E3 ubiquitin-protein ligase complex; leading to its degradation by the proteasome.

The protein localises to the cytoplasm. It localises to the nucleus. The enzyme catalyses a 2'-deoxyribonucleoside 5'-diphosphate + [thioredoxin]-disulfide + H2O = a ribonucleoside 5'-diphosphate + [thioredoxin]-dithiol. Functionally, provides the precursors necessary for DNA synthesis. Catalyzes the biosynthesis of deoxyribonucleotides from the corresponding ribonucleotides. Inhibits Wnt signaling. This is Ribonucleoside-diphosphate reductase subunit M2 (RRM2) from Homo sapiens (Human).